A 501-amino-acid chain; its full sequence is E3 ubiquitin-protein ligase TRIM35 (501 aa).

Met1 bears the N-acetylmethionine mark. Ser8 is subject to Phosphoserine. The RING-type zinc finger occupies 21-61; that stretch reads CAVCYDPFRDAVTLRCGHNFCRRCVSGCWEVQTTPSCPVCK. The segment at 96–137 adopts a B box-type zinc-finger fold; sequence RSPRPCRAHRAPLTLFCLEDKELLCCACQADARHQEHRVQPI. Positions 101, 104, 123, and 129 each coordinate Zn(2+). The stretch at 200-252 forms a coiled coil; sequence VEEQATLDAMKEESRKKHLQAEEKMKQLAEQTEALAREIERLQMEMKEDDMTF. In terms of domain architecture, B30.2/SPRY spans 284-495; sequence LESLQYRVWK…LRICHLRVSI (212 aa).

It belongs to the TRIM/RBCC family. Interacts with PKM isoform M2, but not isoform M1; this interaction may compete with that between PKM and FGFR1, and hence reduces FGFR1-dependent tyrosine phosphorylation of PKM. Interacts with IRF7; this interaction promotes IRF7 proteasomal degradation. Interacts with TRAF3; this interaction promotes TRAF3 activation. As to expression, widely expressed. Highly expressed in brain, heart, kidney, spleen, skeletal muscle, lung and thymus. Lower expression found in stomach, large intestine and bone marrow.

Its subcellular location is the cytoplasm. It localises to the nucleus. The catalysed reaction is S-ubiquitinyl-[E2 ubiquitin-conjugating enzyme]-L-cysteine + [acceptor protein]-L-lysine = [E2 ubiquitin-conjugating enzyme]-L-cysteine + N(6)-ubiquitinyl-[acceptor protein]-L-lysine.. It participates in protein modification; protein ubiquitination. E3 ubiquitin-protein ligase that participates in multiple biological processes including cell death, glucose metabolism, and in particular, the innate immune response. Mediates 'Lys-63'-linked polyubiquitination of TRAF3 thereby promoting type I interferon production via RIG-I signaling pathway. Can also catalyze 'Lys-48'-linked polyubiquitination and proteasomal degradation of viral proteins such as influenza virus PB2. Acts as a negative feedback regulator of TLR7- and TLR9-triggered signaling. Mechanistically, promotes the 'Lys-48'-linked ubiquitination of IRF7 and induces its degradation via a proteasome-dependent pathway. Reduces FGFR1-dependent tyrosine phosphorylation of PKM, inhibiting PKM-dependent lactate production, glucose metabolism, and cell growth. The polypeptide is E3 ubiquitin-protein ligase TRIM35 (Trim35) (Mus musculus (Mouse)).